Here is a 339-residue protein sequence, read N- to C-terminus: Fructose-1,6-bisphosphatase class 1 (339 aa).

Residues Glu-91, Asp-113, Leu-115, and Asp-116 each coordinate Mg(2+). Residues 116-119 (DGSS), Asn-208, and Lys-274 contribute to the substrate site. Glu-280 is a binding site for Mg(2+).

This sequence belongs to the FBPase class 1 family. As to quaternary structure, homotetramer. Requires Mg(2+) as cofactor.

It localises to the cytoplasm. The catalysed reaction is beta-D-fructose 1,6-bisphosphate + H2O = beta-D-fructose 6-phosphate + phosphate. Its pathway is carbohydrate biosynthesis; gluconeogenesis. The protein is Fructose-1,6-bisphosphatase class 1 of Cupriavidus pinatubonensis (strain JMP 134 / LMG 1197) (Cupriavidus necator (strain JMP 134)).